Consider the following 317-residue polypeptide: Melanocyte-stimulating hormone receptor (317 aa).

Topologically, residues 1–37 (MPMHGAQRKLLGSLNSTPTATSNLGLAANHTGAPCLE) are extracellular. Asn-29 is a glycosylation site (N-linked (GlcNAc...) asparagine). The chain crosses the membrane as a helical span at residues 38-63 (VSIPDGLFLSLGLVSLVENVLVVAAI). Topologically, residues 64–72 (AKNRNLHSS) are cytoplasmic. A helical transmembrane segment spans residues 73–93 (MYCFICCLALSDLLVSGSNML). Residues 94–118 (ETAVILLLEAGALATRTSAMQQLHN) are Extracellular-facing. The chain crosses the membrane as a helical span at residues 119 to 140 (TIDVLTCSSMLCSLCFLGAIAV). The Cytoplasmic portion of the chain corresponds to 141-163 (DRYISIFYALRYHSIMTLPRAQR). Residues 164-183 (AIAAIWVASXLSSTLFITYY) form a helical membrane-spanning segment. Topologically, residues 184-191 (DHAAVLLC) are extracellular. A helical membrane pass occupies residues 192–211 (LVVFFLAMLVLMAVLYVHML). Residues 212-240 (ARACQHAHGIIRLHKRQTPAHQGFGLRGA) are Cytoplasmic-facing. The helical transmembrane segment at 241–266 (ATLTILLGIFFLCWGPFFLHLTLVVF) threads the bilayer. Residues 267–279 (CPQHLTCSCIFKN) are Extracellular-facing. Residues 280–300 (FKVFLTLIICNTIIDPLIYAF) traverse the membrane as a helical segment. At 301-317 (RSQELRRTLKEVLLCSW) the chain is on the cytoplasmic side. The S-palmitoyl cysteine moiety is linked to residue Cys-315.

The protein belongs to the G-protein coupled receptor 1 family. Interacts with MGRN1, but does not undergo MGRN1-mediated ubiquitination; this interaction competes with GNAS-binding and thus inhibits agonist-induced cAMP production. Interacts with OPN3; the interaction results in a decrease in MC1R-mediated cAMP signaling and ultimately a decrease in melanin production in melanocytes.

It is found in the cell membrane. Its function is as follows. Receptor for MSH (alpha, beta and gamma) and ACTH. The activity of this receptor is mediated by G proteins which activate adenylate cyclase. Mediates melanogenesis, the production of eumelanin (black/brown) and phaeomelanin (red/yellow), via regulation of cAMP signaling in melanocytes. This chain is Melanocyte-stimulating hormone receptor (MC1R), found in Saguinus midas (Golden-handed tamarin).